A 101-amino-acid chain; its full sequence is Small ribosomal subunit protein uS17 (101 aa).

This sequence belongs to the universal ribosomal protein uS17 family. As to quaternary structure, part of the 30S ribosomal subunit.

Functionally, one of the primary rRNA binding proteins, it binds specifically to the 5'-end of 16S ribosomal RNA. This Kosmotoga olearia (strain ATCC BAA-1733 / DSM 21960 / TBF 19.5.1) protein is Small ribosomal subunit protein uS17.